A 210-amino-acid polypeptide reads, in one-letter code: Thymidylate kinase (210 aa).

Position 9–16 (9–16 (GLEGAGKS)) interacts with ATP.

Belongs to the thymidylate kinase family.

The catalysed reaction is dTMP + ATP = dTDP + ADP. Phosphorylation of dTMP to form dTDP in both de novo and salvage pathways of dTTP synthesis. This chain is Thymidylate kinase, found in Aliivibrio fischeri (strain ATCC 700601 / ES114) (Vibrio fischeri).